Consider the following 141-residue polypeptide: Hemoglobin subunit alpha (141 aa).

The region spanning 1 to 141 is the Globin domain; it reads VLSAADKTAI…VATALGSHYR (141 aa). His59 is an O2 binding site. His88 is a binding site for heme b.

This sequence belongs to the globin family. In terms of assembly, heterotetramer of two alpha chains and two beta chains. In terms of tissue distribution, red blood cells.

Functionally, involved in oxygen transport from the lung to the various peripheral tissues. The chain is Hemoglobin subunit alpha (HBA) from Squalus acanthias (Spiny dogfish).